The chain runs to 214 residues: ATP phosphoribosyltransferase (214 aa).

Belongs to the ATP phosphoribosyltransferase family. Short subfamily. In terms of assembly, heteromultimer composed of HisG and HisZ subunits.

Its subcellular location is the cytoplasm. It catalyses the reaction 1-(5-phospho-beta-D-ribosyl)-ATP + diphosphate = 5-phospho-alpha-D-ribose 1-diphosphate + ATP. It functions in the pathway amino-acid biosynthesis; L-histidine biosynthesis; L-histidine from 5-phospho-alpha-D-ribose 1-diphosphate: step 1/9. Its function is as follows. Catalyzes the condensation of ATP and 5-phosphoribose 1-diphosphate to form N'-(5'-phosphoribosyl)-ATP (PR-ATP). Has a crucial role in the pathway because the rate of histidine biosynthesis seems to be controlled primarily by regulation of HisG enzymatic activity. The sequence is that of ATP phosphoribosyltransferase from Nostoc punctiforme (strain ATCC 29133 / PCC 73102).